We begin with the raw amino-acid sequence, 23 residues long: Phallacidin proprotein 1 (23 aa).

A propeptide is located at residue P1. The cyclopeptide (Ala-Pro) cross-link spans A2–P8. The 2'-cysteinyl-6'-hydroxytryptophan sulfoxide (Trp-Cys) cross-link spans W3–C7. Positions C9–R23 are excised as a propeptide.

It belongs to the MSDIN fungal toxin family. Processed by the macrocyclase-peptidase enzyme POPB to yield a toxic cyclic heptapeptide. POPB first removes 10 residues from the N-terminus. Conformational trapping of the remaining peptide forces the enzyme to release this intermediate rather than proceed to macrocyclization. The enzyme rebinds the remaining peptide in a different conformation and catalyzes macrocyclization of the N-terminal 7 residues.

In terms of biological role, toxin that belongs to the bicyclic heptapeptides called phallotoxins. Although structurally related to amatoxins, phallotoxins have a different mode of action, which is the stabilization of F-actin. Phallotoxins are poisonous when administered parenterally, but not orally because of poor absorption. The protein is Phallacidin proprotein 1 of Amanita exitialis (Guangzhou destroying angel).